The sequence spans 160 residues: Cytochrome b6-f complex subunit 4 (160 aa).

4 helical membrane passes run 36–56 (LLYI…GLAV), 68–88 (PFAT…FQIL), 95–115 (FFGV…PFLE), and 131–151 (SVFL…VLPI).

Belongs to the cytochrome b family. PetD subfamily. The 4 large subunits of the cytochrome b6-f complex are cytochrome b6, subunit IV (17 kDa polypeptide, petD), cytochrome f and the Rieske protein, while the 4 small subunits are petG, petL, petM and petN. The complex functions as a dimer.

The protein localises to the plastid. The protein resides in the chloroplast thylakoid membrane. Its function is as follows. Component of the cytochrome b6-f complex, which mediates electron transfer between photosystem II (PSII) and photosystem I (PSI), cyclic electron flow around PSI, and state transitions. In Welwitschia mirabilis (Tree tumbo), this protein is Cytochrome b6-f complex subunit 4.